A 128-amino-acid chain; its full sequence is Putative pre-16S rRNA nuclease (128 aa).

It belongs to the YqgF nuclease family.

It is found in the cytoplasm. Could be a nuclease involved in processing of the 5'-end of pre-16S rRNA. The chain is Putative pre-16S rRNA nuclease from Sulfurovum sp. (strain NBC37-1).